The primary structure comprises 711 residues: Pentatricopeptide repeat-containing protein At5g46580, chloroplastic (711 aa).

The transit peptide at 1–43 (MATVLTTAIDVCFNPQNSDTKKHSLFLKPSLFRQSRSRKLNIS) directs the protein to the chloroplast. PPR repeat units follow at residues 185–219 (ETIF…GVEL), 220–254 (DNIT…GLMP), 255–289 (DEVT…GWKP), 290–324 (DAIA…DVKP), 325–359 (NVVV…GLTP), 360–394 (NEKT…KWPM), 395–425 (DFIL…MKES), 431–465 (DNFS…GVQV), 466–500 (NVMG…GVKP), and 501–535 (DDRL…NKKL). The region spanning 614 to 696 (LDVRSLSVGA…IFVATKEDLV (83 aa)) is the Smr domain.

It belongs to the PPR family. P subfamily.

It is found in the plastid. Its subcellular location is the chloroplast. This chain is Pentatricopeptide repeat-containing protein At5g46580, chloroplastic, found in Arabidopsis thaliana (Mouse-ear cress).